A 245-amino-acid polypeptide reads, in one-letter code: Fibroblast growth factor 13 (245 aa).

Residues 1-36 form a disordered region; that stretch reads MAAAIASSLIRQKRQAREREKSNACKCVSSPSKGKT. Residues 1–62 form a mediates targeting to the nucleus region; that stretch reads MAAAIASSLI…GSKKRRRRRP (62 aa). The segment at 67 to 201 is mediates interaction with sodium channels; the sequence is KGIVTKLYSR…AHFLPKPLKV (135 aa). The interval 157–164 is tubulin-binding domain necessary and sufficient for tubulin-binding; it reads SMIYRQQQ. A Phosphoserine modification is found at serine 208. Positions 213–245 are disordered; the sequence is TEFSRSGSGTPTKSRSVSGVLNGGKSMSHNEST. Residues 215 to 245 are compositionally biased toward polar residues; the sequence is FSRSGSGTPTKSRSVSGVLNGGKSMSHNEST.

The protein belongs to the heparin-binding growth factors family. As to quaternary structure, interacts with SCN8A; regulates SCN8A activity. Interacts with SCN1A; may regulate SCN1A activity. Interacts with SCN5A; the interaction is direct and may regulate SNC5A density at membranes and function. May also interact with SCN2A and SCN11A. Interacts with MAPK8IP2; may regulate the MAPK8IP2 scaffolding activity. In terms of processing, may be phosphorylated. In terms of tissue distribution, detected in brain, eye and heart. In brain, the different isoforms display different patterns of expression. Expressed in brain and heart (at protein level). Isoform 3 is highly expressed in cardiac myocytes while isoform 1 is the most abundant in brain.

The protein resides in the cell projection. Its subcellular location is the filopodium. It localises to the growth cone. It is found in the dendrite. The protein localises to the cell membrane. The protein resides in the sarcolemma. Its subcellular location is the cytoplasm. It localises to the nucleus. Microtubule-binding protein which directly binds tubulin and is involved in both polymerization and stabilization of microtubules. Through its action on microtubules, may participate to the refinement of axons by negatively regulating axonal and leading processes branching. Plays a crucial role in neuron polarization and migration in the cerebral cortex and the hippocampus. Regulates voltage-gated sodium channel transport and function. May also play a role in MAPK signaling. Required for the development of axonal initial segment-targeting inhibitory GABAergic synapses made by chandelier neurons. Its function is as follows. Seems not to be involved in neuroblast polarization and migration but regulates axon branching. The protein is Fibroblast growth factor 13 of Mus musculus (Mouse).